Consider the following 835-residue polypeptide: Protein translocase subunit SecA 1 (835 aa).

ATP is bound by residues Gln-85, 103 to 107, and Asp-492; that span reads GEGKT. The segment at 788–807 is disordered; the sequence is VQGEAVHPSSDGEEAKKKPV. Residues Cys-819, Cys-821, Cys-830, and Cys-831 each coordinate Zn(2+).

The protein belongs to the SecA family. In terms of assembly, monomer and homodimer. Part of the essential Sec protein translocation apparatus which comprises SecA, SecYEG and auxiliary proteins SecDF. Other proteins may also be involved. The cofactor is Zn(2+).

Its subcellular location is the cell membrane. It localises to the cytoplasm. It catalyses the reaction ATP + H2O + cellular proteinSide 1 = ADP + phosphate + cellular proteinSide 2.. Its function is as follows. Part of the Sec protein translocase complex. Interacts with the SecYEG preprotein conducting channel. Has a central role in coupling the hydrolysis of ATP to the transfer of proteins into and across the cell membrane, serving as an ATP-driven molecular motor driving the stepwise translocation of polypeptide chains across the membrane. This chain is Protein translocase subunit SecA 1, found in Bacillus anthracis.